We begin with the raw amino-acid sequence, 287 residues long: Hydroxysteroid 11-beta-dehydrogenase 1-like protein (287 aa).

The signal sequence occupies residues 1-20 (MMKPFGKVLCAAGSLAVLLA). NADP(+)-binding positions include 41-67 (GASA…TARR), 92-93 (DM), and 119-121 (NHI). Residue Ser170 coordinates substrate. Tyr183 acts as the Proton acceptor in catalysis. NADP(+) contacts are provided by residues 183–187 (YSATK) and 216–222 (GLIDTDA).

Belongs to the short-chain dehydrogenases/reductases (SDR) family.

It is found in the secreted. It catalyses the reaction cortisone + NADPH + H(+) = cortisol + NADP(+). Its function is as follows. Unidirectional NADP(+)-dependent cortisol dehydrogenase (in vitro). This is Hydroxysteroid 11-beta-dehydrogenase 1-like protein (HSD11B1L) from Gallus gallus (Chicken).